A 160-amino-acid polypeptide reads, in one-letter code: Leucokinin (160 aa).

The signal sequence occupies residues 1–19; sequence MAKIVLCMVLLAFGRQVYG. Residues 20–130 constitute a propeptide that is removed on maturation; it reads ASLVPAPISE…RIKSQLQRDE (111 aa). Gly147 bears the Glycine amide mark. A propeptide spanning residues 151-160 is cleaved from the precursor; it reads SPEPPILPDY.

The protein resides in the secreted. Acts through intracellular calcium in Malpighian tubule stellate cells to raise chloride conductance. This Drosophila melanogaster (Fruit fly) protein is Leucokinin (Lk).